Here is a 140-residue protein sequence, read N- to C-terminus: 6,7-dimethyl-8-ribityllumazine synthase (140 aa).

Residues F11, 42–44 (ALE), and 66–68 (VVI) contribute to the 5-amino-6-(D-ribitylamino)uracil site. 71–72 (ET) provides a ligand contact to (2S)-2-hydroxy-3-oxobutyl phosphate. The active-site Proton donor is H74. Residue N98 coordinates 5-amino-6-(D-ribitylamino)uracil. Residue R112 participates in (2S)-2-hydroxy-3-oxobutyl phosphate binding.

It belongs to the DMRL synthase family.

The catalysed reaction is (2S)-2-hydroxy-3-oxobutyl phosphate + 5-amino-6-(D-ribitylamino)uracil = 6,7-dimethyl-8-(1-D-ribityl)lumazine + phosphate + 2 H2O + H(+). It functions in the pathway cofactor biosynthesis; riboflavin biosynthesis; riboflavin from 2-hydroxy-3-oxobutyl phosphate and 5-amino-6-(D-ribitylamino)uracil: step 1/2. Its function is as follows. Catalyzes the formation of 6,7-dimethyl-8-ribityllumazine by condensation of 5-amino-6-(D-ribitylamino)uracil with 3,4-dihydroxy-2-butanone 4-phosphate. This is the penultimate step in the biosynthesis of riboflavin. This chain is 6,7-dimethyl-8-ribityllumazine synthase, found in Erythrobacter litoralis (strain HTCC2594).